Consider the following 911-residue polypeptide: Inter-alpha-trypsin inhibitor heavy chain H1 (911 aa).

The N-terminal stretch at 1–27 is a signal peptide; that stretch reads MDGAMGPRGLLLCMYLVSLLILQAMPA. A propeptide spanning residues 28–34 is cleaved from the precursor; the sequence is LGSATGR. The VIT domain maps to 37 to 166; sequence SSEKRQAVDT…KVTFQLTYEE (130 aa). Residue Cys60 is glycosylated (S-linked (Hex...) cysteine). Ser129 carries the post-translational modification Phosphoserine. The short motif at 181 to 184 is the Phagocytosis uptake signal element; sequence VKPK. 2 disulfides stabilise this stretch: Cys244/Cys247 and Cys268/Cys540. Residue Asn285 is glycosylated (N-linked (GlcNAc...) (complex) asparagine). Positions 290–450 constitute a VWFA domain; sequence NKNVVFVIDI…FNFLEVMSME (161 aa). The interval 387-911 is hyaluronan-binding; it reads SLPELSNHAS…YTDYIVPDIF (525 aa). A phosphothreonine mark is found at Thr402 and Thr407. Asn588 carries N-linked (GlcNAc...) (complex) asparagine glycosylation. An O-linked (GalNAc...) threonine glycan is attached at Thr653. Position 672 is an aspartate 1-(chondroitin 4-sulfate)-ester (Asp672). Positions 673-911 are excised as a propeptide; sequence PHFIIHVPQK…YTDYIVPDIF (239 aa). Asn750 carries N-linked (GlcNAc...) asparagine glycosylation.

It belongs to the ITIH family. As to quaternary structure, I-alpha-I plasma protease inhibitors are assembled from one or two heavy chains (HC) and one light chain, bikunin. Inter-alpha-inhibitor (I-alpha-I) is composed of ITIH1/HC1, ITIH2/HC2 and bikunin. Interacts with TNFAIP6 (via Link and CUB domains). Post-translationally, heavy chains are linked to bikunin via chondroitin 4-sulfate esterified to the alpha-carboxyl of the C-terminal aspartate after propeptide cleavage. The S-linked glycan is composed of two 6-carbon sugars, possibly Glc or Gal.

Its subcellular location is the secreted. In terms of biological role, may act as a carrier of hyaluronan in serum or as a binding protein between hyaluronan and other matrix protein, including those on cell surfaces in tissues to regulate the localization, synthesis and degradation of hyaluronan which are essential to cells undergoing biological processes. Contains a potential peptide which could stimulate a broad spectrum of phagocytotic cells. This Homo sapiens (Human) protein is Inter-alpha-trypsin inhibitor heavy chain H1 (ITIH1).